The following is a 362-amino-acid chain: L-asparaginase 2-1 (362 aa).

Positions 1–25 (MRSLNTLLLSLFVAMSSGAPLLKIR) are cleaved as a signal peptide. An N-linked (GlcNAc...) asparagine glycan is attached at Asn29. One can recognise an Asparaginase/glutaminase domain in the interval 33–359 (PSIKIFGTGG…DQIRSVFSGV (327 aa)). Thr43 acts as the O-isoaspartyl threonine intermediate in catalysis. Ser89 lines the substrate pocket. N-linked (GlcNAc...) asparagine glycosylation is present at Asn93. Position 122-123 (122-123 (TD)) interacts with substrate. Asn239 carries an N-linked (GlcNAc...) asparagine glycan.

It belongs to the asparaginase 1 family.

Its subcellular location is the secreted. The protein resides in the periplasm. The enzyme catalyses L-asparagine + H2O = L-aspartate + NH4(+). The sequence is that of L-asparaginase 2-1 (ASP3-1) from Saccharomyces cerevisiae (strain ATCC 204508 / S288c) (Baker's yeast).